Reading from the N-terminus, the 265-residue chain is 3-methyl-2-oxobutanoate hydroxymethyltransferase (265 aa).

Positions 45 and 84 each coordinate Mg(2+). 3-methyl-2-oxobutanoate is bound by residues 45–46 (DS), D84, and K112. Residue E114 coordinates Mg(2+). E181 (proton acceptor) is an active-site residue.

The protein belongs to the PanB family. Homodecamer; pentamer of dimers. Requires Mg(2+) as cofactor.

It localises to the cytoplasm. The catalysed reaction is 3-methyl-2-oxobutanoate + (6R)-5,10-methylene-5,6,7,8-tetrahydrofolate + H2O = 2-dehydropantoate + (6S)-5,6,7,8-tetrahydrofolate. Its pathway is cofactor biosynthesis; (R)-pantothenate biosynthesis; (R)-pantoate from 3-methyl-2-oxobutanoate: step 1/2. Its function is as follows. Catalyzes the reversible reaction in which hydroxymethyl group from 5,10-methylenetetrahydrofolate is transferred onto alpha-ketoisovalerate to form ketopantoate. The sequence is that of 3-methyl-2-oxobutanoate hydroxymethyltransferase from Yersinia pestis bv. Antiqua (strain Antiqua).